Consider the following 163-residue polypeptide: Protein-export protein SecB (163 aa).

This sequence belongs to the SecB family. As to quaternary structure, homotetramer, a dimer of dimers. One homotetramer interacts with 1 SecA dimer.

It localises to the cytoplasm. One of the proteins required for the normal export of preproteins out of the cell cytoplasm. It is a molecular chaperone that binds to a subset of precursor proteins, maintaining them in a translocation-competent state. It also specifically binds to its receptor SecA. This Brucella canis (strain ATCC 23365 / NCTC 10854 / RM-666) protein is Protein-export protein SecB.